The chain runs to 79 residues: Small serum protein 3 (79 aa).

The first 19 residues, 1-19 (MKVFFILIIFSFTLATCQG), serve as a signal peptide directing secretion. 3 disulfides stabilise this stretch: Cys-21-Cys-72, Cys-39-Cys-64, and Cys-62-Cys-71.

It is found in the secreted. In terms of biological role, shows an slight inhibitory effect toward the metalloproteinase brevilysin H6, but does not inhibit the metalloproteinases thermolysin, HR1A and HR1B. The sequence is that of Small serum protein 3 from Protobothrops flavoviridis (Habu).